The chain runs to 467 residues: Chromosomal replication initiator protein DnaA (467 aa).

The interval 1-85 (MSLSLWQQCL…FEVGAKPASS (85 aa)) is domain I, interacts with DnaA modulators. The segment at 85 to 130 (SLQKGAVSPAAAAIPAAQVQTARVAPTIVRPGWDNVPAPAEPTYRS) is domain II. The interval 131–347 (NVNVKHTFDN…GALNRVIANA (217 aa)) is domain III, AAA+ region. 4 residues coordinate ATP: Gly-175, Gly-177, Lys-178, and Thr-179. The tract at residues 348 to 467 (NFTGRAITID…FSNLIRTLSS (120 aa)) is domain IV, binds dsDNA.

This sequence belongs to the DnaA family. In terms of assembly, oligomerizes as a right-handed, spiral filament on DNA at oriC.

The protein localises to the cytoplasm. Functionally, plays an essential role in the initiation and regulation of chromosomal replication. ATP-DnaA binds to the origin of replication (oriC) to initiate formation of the DNA replication initiation complex once per cell cycle. Binds the DnaA box (a 9 base pair repeat at the origin) and separates the double-stranded (ds)DNA. Forms a right-handed helical filament on oriC DNA; dsDNA binds to the exterior of the filament while single-stranded (ss)DNA is stabiized in the filament's interior. The ATP-DnaA-oriC complex binds and stabilizes one strand of the AT-rich DNA unwinding element (DUE), permitting loading of DNA polymerase. After initiation quickly degrades to an ADP-DnaA complex that is not apt for DNA replication. Binds acidic phospholipids. The sequence is that of Chromosomal replication initiator protein DnaA from Klebsiella pneumoniae (strain 342).